Here is a 168-residue protein sequence, read N- to C-terminus: Transcriptional regulator MraZ (168 aa).

2 SpoVT-AbrB domains span residues Glu-8–Arg-51 and Ala-90–Thr-140.

The protein belongs to the MraZ family. In terms of assembly, forms oligomers.

Its subcellular location is the cytoplasm. It localises to the nucleoid. The sequence is that of Transcriptional regulator MraZ from Cereibacter sphaeroides (strain ATCC 17025 / ATH 2.4.3) (Rhodobacter sphaeroides).